Here is a 798-residue protein sequence, read N- to C-terminus: Serine/threonine-protein kinase SIK2 (798 aa).

One can recognise a Protein kinase domain in the interval Tyr26–Met277. ATP contacts are provided by residues Leu32–Val40 and Lys55. The active-site Proton acceptor is Asp148. A Phosphothreonine modification is found at Thr181. Residue Ser185 is modified to Phosphoserine. The UBA domain maps to Asp302 to Glu342. Residues Gln351–Gln361 are compositionally biased toward polar residues. The segment at Gln351–Glu382 is disordered. Position 575 is a phosphoserine (Ser575). The segment at Ala672–Ala691 is disordered. The segment covering Cys673 to Leu685 has biased composition (polar residues).

This sequence belongs to the protein kinase superfamily. CAMK Ser/Thr protein kinase family. SNF1 subfamily. The cofactor is Mg(2+). In terms of processing, phosphorylated at Thr-181 by STK11/LKB1 in complex with STE20-related adapter-alpha (STRADA) pseudo kinase and CAB39. As to expression, ubiquitously expressed in embryonic tissue.

The protein localises to the cytoplasm. The catalysed reaction is L-seryl-[protein] + ATP = O-phospho-L-seryl-[protein] + ADP + H(+). The enzyme catalyses L-threonyl-[protein] + ATP = O-phospho-L-threonyl-[protein] + ADP + H(+). With respect to regulation, activated by phosphorylation on Thr-181. Phosphorylates IRS1 in insulin-stimulated adipocytes, potentially modulating the efficiency of insulin signal transduction. Inhibits CREB activity by phosphorylating and repressing the CREB-specific coactivators, CRTC1-3. This is Serine/threonine-protein kinase SIK2 (SIK2) from Gallus gallus (Chicken).